We begin with the raw amino-acid sequence, 68 residues long: DNA gyrase inhibitor YacG (68 aa).

Zn(2+) contacts are provided by cysteine 10, cysteine 13, cysteine 29, and cysteine 33. The interval 45–68 is disordered; sequence EKRIPSDTELSDSDEWSEEDPLKH. Over residues 53-68 the composition is skewed to acidic residues; that stretch reads ELSDSDEWSEEDPLKH.

This sequence belongs to the DNA gyrase inhibitor YacG family. In terms of assembly, interacts with GyrB. It depends on Zn(2+) as a cofactor.

Its function is as follows. Inhibits all the catalytic activities of DNA gyrase by preventing its interaction with DNA. Acts by binding directly to the C-terminal domain of GyrB, which probably disrupts DNA binding by the gyrase. This Yersinia pseudotuberculosis serotype O:1b (strain IP 31758) protein is DNA gyrase inhibitor YacG.